The chain runs to 885 residues: Alanine--tRNA ligase (885 aa).

Zn(2+)-binding residues include H563, H567, C677, and H681. A disordered region spans residues 848–868 (LGGKGGGGRPDRAQGGAPSLA).

It belongs to the class-II aminoacyl-tRNA synthetase family. The cofactor is Zn(2+).

The protein localises to the cytoplasm. It carries out the reaction tRNA(Ala) + L-alanine + ATP = L-alanyl-tRNA(Ala) + AMP + diphosphate. Functionally, catalyzes the attachment of alanine to tRNA(Ala) in a two-step reaction: alanine is first activated by ATP to form Ala-AMP and then transferred to the acceptor end of tRNA(Ala). Also edits incorrectly charged Ser-tRNA(Ala) and Gly-tRNA(Ala) via its editing domain. In Paracoccus denitrificans (strain Pd 1222), this protein is Alanine--tRNA ligase.